The primary structure comprises 276 residues: Homeobox-leucine zipper protein HOX11 (276 aa).

The tract at residues 1-92 is disordered; the sequence is MVDGHLEAST…DDGGSARKKL (92 aa). A compositionally biased stretch (polar residues) spans 39–48; sequence LSSSPNNSAG. Over residues 58 to 73 the composition is skewed to gly residues; that stretch reads HGLGGNDAAPGGGGGD. The segment at residues 87-146 is a DNA-binding region (homeobox); the sequence is SARKKLRLSKEQSAFLEESFKEHSTLNPKQKLALAKQLNLRPRQVEVWFQNRRARTKLKQ. The interval 145 to 189 is leucine-zipper; the sequence is KQTEVDCEYLKRCCETLTEENRRLQKELAELRALKTVHPFYMHLP. The disordered stretch occupies residues 214 to 244; that stretch reads AATSSTAAPPAAPSSGGIAATSSSSAAAAAA.

Belongs to the HD-ZIP homeobox family. Class II subfamily. As to expression, expressed in stems, leaf sheaths and blades and panicles.

The protein resides in the nucleus. Probable transcription factor. The protein is Homeobox-leucine zipper protein HOX11 (HOX11) of Oryza sativa subsp. indica (Rice).